Reading from the N-terminus, the 439-residue chain is Methionine aminopeptidase 2-1 (439 aa).

The segment at 1-87 (MSGGESRSPD…DKLFPSGNFP (87 aa)) is disordered. Residues 22–32 (GGDDEESDGDG) are compositionally biased toward acidic residues. A compositionally biased stretch (basic residues) spans 47 to 61 (KKRKKRNKKKSKKKS). His190 lines the substrate pocket. 3 residues coordinate a divalent metal cation: Asp211, Asp222, and His291. Residue His299 coordinates substrate. 2 residues coordinate a divalent metal cation: Glu324 and Glu420.

Belongs to the peptidase M24A family. Methionine aminopeptidase eukaryotic type 2 subfamily. Co(2+) serves as cofactor. The cofactor is Zn(2+). Requires Mn(2+) as cofactor. It depends on Fe(2+) as a cofactor.

The protein localises to the cytoplasm. The catalysed reaction is Release of N-terminal amino acids, preferentially methionine, from peptides and arylamides.. Cotranslationally removes the N-terminal methionine from nascent proteins. The N-terminal methionine is often cleaved when the second residue in the primary sequence is small and uncharged (Met-Ala-, Cys, Gly, Pro, Ser, Thr, or Val). The chain is Methionine aminopeptidase 2-1 from Chaetomium globosum (strain ATCC 6205 / CBS 148.51 / DSM 1962 / NBRC 6347 / NRRL 1970) (Soil fungus).